Reading from the N-terminus, the 32-residue chain is Conotoxin pr6b (32 aa).

4-hydroxyproline is present on residues Pro-6, Pro-13, Pro-20, and Pro-29. 3 disulfides stabilise this stretch: Cys-7/Cys-18, Cys-14/Cys-23, and Cys-17/Cys-31.

As to expression, expressed by the venom duct.

The protein localises to the secreted. Functionally, intraperitoneal injection into fish (0.5 nmol) provokes vertical suspension and paralysis after 6 minutes. The chain is Conotoxin pr6b from Conus parius (Cone snail).